A 205-amino-acid polypeptide reads, in one-letter code: Small ribosomal subunit protein uS4 (205 aa).

Basic and acidic residues predominate over residues 1-16 (MSKRETTKYKIDRRMG). The disordered stretch occupies residues 1-46 (MSKRETTKYKIDRRMGENIWGRPKSPVNRRDYGPGQHGQRRKGKLS). The S4 RNA-binding domain occupies 94 to 157 (SRLDAVIYRA…KQLVLVLESV (64 aa)).

It belongs to the universal ribosomal protein uS4 family. In terms of assembly, part of the 30S ribosomal subunit. Contacts protein S5. The interaction surface between S4 and S5 is involved in control of translational fidelity.

One of the primary rRNA binding proteins, it binds directly to 16S rRNA where it nucleates assembly of the body of the 30S subunit. In terms of biological role, with S5 and S12 plays an important role in translational accuracy. This Bartonella quintana (strain Toulouse) (Rochalimaea quintana) protein is Small ribosomal subunit protein uS4.